We begin with the raw amino-acid sequence, 526 residues long: GMP synthase [glutamine-hydrolyzing] (526 aa).

One can recognise a Glutamine amidotransferase type-1 domain in the interval 9–208; that stretch reads RILILDFGSQ…VMDICGCETL (200 aa). The Nucleophile role is filled by Cys86. Catalysis depends on residues His182 and Glu184. The 193-residue stretch at 209-401 folds into the GMPS ATP-PPase domain; sequence WTSSSIIEDA…LGLPYEMLYR (193 aa). Residue 236–242 participates in ATP binding; sequence SGGVDSS.

In terms of assembly, homodimer.

The catalysed reaction is XMP + L-glutamine + ATP + H2O = GMP + L-glutamate + AMP + diphosphate + 2 H(+). It functions in the pathway purine metabolism; GMP biosynthesis; GMP from XMP (L-Gln route): step 1/1. Catalyzes the synthesis of GMP from XMP. The chain is GMP synthase [glutamine-hydrolyzing] from Psychromonas ingrahamii (strain DSM 17664 / CCUG 51855 / 37).